A 190-amino-acid chain; its full sequence is Small ribosomal subunit protein uS5 (190 aa).

In terms of domain architecture, S5 DRBM spans 22–85 (FVDKLVHINR…ESAKRNLTRV (64 aa)).

It belongs to the universal ribosomal protein uS5 family. In terms of assembly, part of the 30S ribosomal subunit. Contacts proteins S4 and S8.

Its function is as follows. With S4 and S12 plays an important role in translational accuracy. Located at the back of the 30S subunit body where it stabilizes the conformation of the head with respect to the body. The polypeptide is Small ribosomal subunit protein uS5 (Rhodopseudomonas palustris (strain BisA53)).